Here is a 343-residue protein sequence, read N- to C-terminus: Single-pass membrane and coiled-coil domain-containing protein 2 (343 aa).

The span at 86-99 (EHDQDLSKQDKQET) shows a compositional bias: basic and acidic residues. Positions 86-108 (EHDQDLSKQDKQETDVDEDPQAS) are disordered. Residues 152-238 (TEKIDNIIKK…SAKLRMYQME (87 aa)) are a coiled coil. The helical transmembrane segment at 284 to 304 (IFIMFDVLTVTGLLCYILFFG) threads the bilayer.

The protein resides in the membrane. This is Single-pass membrane and coiled-coil domain-containing protein 2 (SMCO2) from Homo sapiens (Human).